A 1434-amino-acid chain; its full sequence is Probable deoxyribonuclease RhsA (1434 aa).

The tract at residues 14-42 is disordered; sequence AMHAGNRPNPPDDRPQPCRGKPPTSPGKT. 2 helical membrane-spanning segments follow: residues 48-68 and 70-90; these read FLGA…VAAA and VFLV…LAVF. YD repeat units follow at residues 486–521, 592–628, and 847–876; these read YDAA…CADG, DDTG…LGRE, and YDAR…LTEV.

It belongs to the RHS/WapA nuclease family.

The protein resides in the membrane. Its function is as follows. Toxic component of a toxin-immunity protein module, which functions as a cellular contact-dependent growth inhibition (CDI) system. This protein may be a nuclease that is specifically inhibited by its cognate immunity protein RhsAI. Upon expression of the C-terminus (residues 1284-1434) in E.coli growth is inhibited, cells elongate, nucleoids condense and plasmid DNA is degraded; these effects are blocked specifically by cognate immunity protein RshIA. Cell contact is necessary for growth inhibition. The chain is Probable deoxyribonuclease RhsA (rhsA) from Dickeya dadantii (strain 3937) (Erwinia chrysanthemi (strain 3937)).